Reading from the N-terminus, the 147-residue chain is UPF0735 ACT domain-containing protein YszB (147 aa).

The 76-residue stretch at 70 to 145 (TLFFHLEDRS…FVEKVEILGS (76 aa)) folds into the ACT domain.

The protein belongs to the UPF0735 family.

The protein is UPF0735 ACT domain-containing protein YszB (yszB) of Bacillus subtilis (strain 168).